The sequence spans 1356 residues: Tenascin-R (1356 aa).

The first 31 residues, 1-31 (MGIEGETVVLKNMLIGVNLILLGSMLKPSEC), serve as a signal peptide directing secretion. Asn-55 carries an N-linked (GlcNAc...) asparagine glycan. The stretch at 127-157 (CASSAQVLQELLSRIEMLEREVSVLRDQCNT) forms a coiled coil. Ser-176 is a glycosylation site (O-linked (Xyl...) (chondroitin sulfate) serine). N-linked (GlcNAc...) asparagine glycans are attached at residues Asn-180 and Asn-198. 3 consecutive EGF-like domains span residues 188–199 (CICNEGWFGKNC), 204–230 (CPLG…GDDC), and 235–261 (CPTD…GEDC). Ser-271 carries an O-linked (Xyl...) (chondroitin sulfate) serine glycan. The N-linked (GlcNAc...) asparagine glycan is linked to Asn-278. EGF-like domains lie at 281–292 (CLCQEGYAGEDC) and 293–324 (SQRR…PDCS). 2 disulfide bridges follow: Cys-297-Cys-307 and Cys-314-Cys-323. The O-linked (Xyl...) (chondroitin sulfate) serine glycan is linked to Ser-302. Fibronectin type-III domains lie at 328-419 (PPED…TPQG), 420-504 (LQFK…TVID), 505-596 (GPTQ…IDAP), 597-686 (KNLR…TELD), 687-776 (SPRD…FRPI), 777-864 (SHLH…TGID), 865-953 (PPKN…AMDS), 954-1040 (PMDL…TLLD), and 1041-1129 (PPAN…GGRV). Residues Asn-391, Asn-469, and Asn-580 are each glycosylated (N-linked (GlcNAc...) asparagine). Residue Ser-723 is modified to Phosphoserine. N-linked (GlcNAc...) asparagine glycans are attached at residues Asn-790, Asn-868, Asn-873, Asn-1034, Asn-1044, and Asn-1259. The region spanning 1127 to 1342 (GRVFSHPQDC…FVEMKMRPYI (216 aa)) is the Fibrinogen C-terminal domain.

Belongs to the tenascin family. Forms oligomers. Interacts with TNC and FN1. Interacts with BCAN and ACAN in a calcium -dependent manner. Interacts with CNTN1, SCN2B, PTPRZ1, and CSPG3. In terms of processing, contains N-linked oligosaccharides, O-linked sialylated structures. Contains O-linked chondroitin sulfate glycosaminoglycans. Contains N-linked oligosaccharides with a sulfated carbohydrate structure type GalNAc-4-SO4 or HNK-1 (SO4-3-GlcUABeta1,3GalBeta1,4GlcNAc). The levels of HNK-1 rise and fall in parallel to those of TNR during postnatal development of the cerebellum. In contrast, levels of GalNAc-4-SO4 are regulated independently from those of TNR, rising late in cerebellar development and continuing into adulthood. Early in postnatal development, GalNAc-4-SO4 is found predominantly on isoform 1, whereas in the adult it is predominantly on isoform 2. As to expression, brain-specific. Expressed in oligodendrocytes and small subsets of neurons (mainly interneurons and motoneurons) of the cerebellum, hippocampus and olfactory bulb. Expressed in dorsal root ganglia.

It localises to the secreted. It is found in the extracellular space. The protein resides in the extracellular matrix. In terms of biological role, neural extracellular matrix (ECM) protein involved in interactions with different cells and matrix components. Theses interactions can influence cellular behavior by either evoking a stable adhesion and differentiation, or repulsion and inhibition of neurite growth. Binding to cell surface gangliosides inhibits RGD-dependent integrin-mediated cell adhesion and results in an inhibition of PTK2/FAK1 (FAK) phosphorylation and cell detachment. Binding to membrane surface sulfatides results in a oligodendrocyte adhesion and differentiation. Interaction with CNTN1 induces a repulsion of neurons and an inhibition of neurite outgrowth. Interacts with SCN2B may play a crucial role in clustering and regulation of activity of sodium channels at nodes of Ranvier. TNR-linked chondroitin sulfate glycosaminoglycans are involved in the interaction with FN1 and mediates inhibition of cell adhesion and neurite outgrowth. The highly regulated addition of sulfated carbohydrate structure may modulate the adhesive properties of TNR over the course of development and during synapse maintenance. The polypeptide is Tenascin-R (Tnr) (Rattus norvegicus (Rat)).